We begin with the raw amino-acid sequence, 696 residues long: MLYQLVVDSPSFKKVIRLQNSCYSIGRHPSNTIVIPSPQISRRHATLIKKINPNLDISFHIIDGDLEGHRSRNGVWVNGESHLDYELVHGDVIALSEDIQIFYQAIPTDPKDTISGGGDRQRLTPDLSEHFPQEQWDITLIGHEDDLSQLSHEKLSKLAACIEYSPYPMVEIDYFGNLTYLNTATKEKFPSIQKDSMAHPLLKDIIPQREDTPIYYLRTREVQIGDKFYEQHIHYPAESQFIRSYIFDITERKVIEQSIHYQAFYDPLTDLPNRFLFKQELGKVLSNVQNQSSVLGLVLLGFRELQSLNDLLGHSVADEVLKIITERLSAHVRLEDLLCRWRGDTFILLIQSCRNLDEIEVFVRRLLAVLKRPFFIANNPLYLQGYAGIACYPNHGDNVEILLNRVGIALNEVKDIGSRQYCFYEESMNSDHLERIQLEHALHQALERDEFLLYYQPIIDVQSGRLCGVEALIRWQHPIHGLVSPGLFIGLLETTGLIIPVGEWIMRTAFQHFHHWAPAVDDDFRIAINLSPQQFQAPDLLPTILRILAESSLPPHRLEVEITENIVMQNVTATQNLLNALQSHGIRLSMDDFGTGYSSLSYLKTFPFNTLKIDRSFTKDILHTPKDAAIIQAMLLLGNGFNLNIIAEGIEEEPQARCLYDLGCREMQGYWFSHPLSEAEITAFLAEGNFQRFCLG.

One can recognise a GGDEF domain in the interval 293–426 (SVLGLVLLGF…GSRQYCFYEE (134 aa)). One can recognise an EAL domain in the interval 435 to 689 (RIQLEHALHQ…EITAFLAEGN (255 aa)).

This is an uncharacterized protein from Synechocystis sp. (strain ATCC 27184 / PCC 6803 / Kazusa).